Consider the following 356-residue polypeptide: Glycerol-1-phosphate dehydrogenase [NAD(P)+] (356 aa).

NAD(+) contacts are provided by residues 103–107 (GRSID) and 125–128 (TAAS). Asp-130 lines the substrate pocket. Ser-134 contacts NAD(+). Asp-177 lines the substrate pocket. Zn(2+) contacts are provided by Asp-177 and His-257. Substrate is bound at residue His-261. Residue His-273 participates in Zn(2+) binding.

Belongs to the glycerol-1-phosphate dehydrogenase family. Zn(2+) serves as cofactor.

It localises to the cytoplasm. It catalyses the reaction sn-glycerol 1-phosphate + NAD(+) = dihydroxyacetone phosphate + NADH + H(+). The catalysed reaction is sn-glycerol 1-phosphate + NADP(+) = dihydroxyacetone phosphate + NADPH + H(+). It functions in the pathway membrane lipid metabolism; glycerophospholipid metabolism. Catalyzes the NAD(P)H-dependent reduction of dihydroxyacetonephosphate (DHAP or glycerone phosphate) to glycerol 1-phosphate (G1P). The G1P thus generated is used as the glycerophosphate backbone of phospholipids in the cellular membranes of Archaea. In Methanosarcina acetivorans (strain ATCC 35395 / DSM 2834 / JCM 12185 / C2A), this protein is Glycerol-1-phosphate dehydrogenase [NAD(P)+].